Consider the following 116-residue polypeptide: T cell receptor alpha variable 38-2/delta variable 8 (116 aa).

The N-terminal stretch at 1–21 (MACPGFLWALVISTCLEFSMA) is a signal peptide. The Ig-like domain occupies 22-116 (QTVTQSQPEM…AAMYFCAYRS (95 aa)). An intrachain disulfide couples Cys-43 to Cys-112. Residue Asn-78 is glycosylated (N-linked (GlcNAc...) asparagine).

As to quaternary structure, alpha-beta TR is a heterodimer composed of an alpha and beta chain; disulfide-linked. The alpha-beta TR is associated with the transmembrane signaling CD3 coreceptor proteins to form the TR-CD3 (TcR or TCR). The assembly of alpha-beta TR heterodimers with CD3 occurs in the endoplasmic reticulum where a single alpha-beta TR heterodimer associates with one CD3D-CD3E heterodimer, one CD3G-CD3E heterodimer and one CD247 homodimer forming a stable octameric structure. CD3D-CD3E and CD3G-CD3E heterodimers preferentially associate with TR alpha and TR beta chains, respectively. The association of the CD247 homodimer is the last step of TcR assembly in the endoplasmic reticulum and is required for transport to the cell surface.

It localises to the cell membrane. Its function is as follows. V region of the variable domain of T cell receptor (TR) alpha chain that participates in the antigen recognition. Alpha-beta T cell receptors are antigen specific receptors which are essential to the immune response and are present on the cell surface of T lymphocytes. Recognize peptide-major histocompatibility (MH) (pMH) complexes that are displayed by antigen presenting cells (APC), a prerequisite for efficient T cell adaptive immunity against pathogens. Binding of alpha-beta TR to pMH complex initiates TR-CD3 clustering on the cell surface and intracellular activation of LCK that phosphorylates the ITAM motifs of CD3G, CD3D, CD3E and CD247 enabling the recruitment of ZAP70. In turn ZAP70 phosphorylates LAT, which recruits numerous signaling molecules to form the LAT signalosome. The LAT signalosome propagates signal branching to three major signaling pathways, the calcium, the mitogen-activated protein kinase (MAPK) kinase and the nuclear factor NF-kappa-B (NF-kB) pathways, leading to the mobilization of transcription factors that are critical for gene expression and essential for T cell growth and differentiation. The T cell repertoire is generated in the thymus, by V-(D)-J rearrangement. This repertoire is then shaped by intrathymic selection events to generate a peripheral T cell pool of self-MH restricted, non-autoaggressive T cells. Post-thymic interaction of alpha-beta TR with the pMH complexes shapes TR structural and functional avidity. In Homo sapiens (Human), this protein is T cell receptor alpha variable 38-2/delta variable 8.